Consider the following 813-residue polypeptide: Origin of replication complex subunit 1B (813 aa).

A disordered region spans residues 1–109 (MASTPRAKTF…TPKKKKKIDS (109 aa)). Positions 11–21 (KSPTKTPSNIY) are enriched in polar residues. The span at 27–41 (SPSSTSHTPQTPETH) shows a compositional bias: low complexity. The segment covering 43–52 (PLRRSARHVS) has biased composition (basic residues). Residues 83-90 (PRKPTTDV) carry the Nuclear localization signal motif. Residues 163–187 (DPEIEDCQICFKSDTNIMIECDDCL) form a histone H3 binding region. The segment at 166–215 (IEDCQICFKSDTNIMIECDDCLGGFHLKCLKPPLKEVPEGDWICQFCEVK) adopts a PHD-type zinc-finger fold. Residues C169, C172, C183, C186, H191, and C194 each coordinate Zn(2+). The tract at residues 203–207 (PEGDW) is histone H3 binding. Positions 209 and 212 each coordinate Zn(2+). The region spanning 226–344 (PKPPEGKKLA…VHWRSFKRLA (119 aa)) is the BAH domain. Residues 319 to 324 (ASNDGD) are histone H3 binding. A disordered region spans residues 349 to 372 (GDSDSDQEWNGRKEEEVDDSDEEM). Residues 436–803 (PKSLPCRSKE…DDVAFALKDN (368 aa)) form a necessary and sufficient for ORC complex assembly region. Residue 471–479 (GVPGTGKTI) participates in ATP binding. Mg(2+) contacts are provided by D561 and E562. E562, N595, and R660 together coordinate ATP.

The protein belongs to the ORC1 family. Component of the origin recognition complex (ORC) composed of at least ORC1 (ORC1A or ORC1B), ORC2, ORC3, ORC4, ORC5 and ORC6. ORC is regulated in a cell-cycle and development dependent manner. It is sequentially assembled at the exit from anaphase of mitosis and disassembled as cells enter S phase. Interacts directly with ORC2 and ORC5. Binds mostly unmodified histone H3, and, with lower efficiency, H3K4me1 H3K4me2 and H3K4me3. In terms of tissue distribution, follow a cell-cycle regulation with a peak at the G1/S-phase. Mostly expressed in flower buds, and, to a lower exent, in roots, leaves and stems.

It localises to the nucleus. Functionally, essential protein required for ovules fertilization. Component of the origin recognition complex (ORC) that binds origins of replication. It has a role in both chromosomal replication and mating type transcriptional silencing. Binds to the ARS consensus sequence (ACS) of origins of replication. H3K4me3 effector that positively regulates the transcription of a subset of genes. This is Origin of replication complex subunit 1B from Arabidopsis thaliana (Mouse-ear cress).